We begin with the raw amino-acid sequence, 272 residues long: HMP-PP phosphatase (272 aa).

The active-site Nucleophile is the Asp-8. Residues Asp-8, Asp-10, and Asp-212 each contribute to the Mg(2+) site.

Belongs to the HAD-like hydrolase superfamily. Cof family. Mg(2+) is required as a cofactor.

It catalyses the reaction 4-amino-2-methyl-5-(diphosphooxymethyl)pyrimidine + H2O = 4-amino-2-methyl-5-(phosphooxymethyl)pyrimidine + phosphate + H(+). Functionally, catalyzes the hydrolysis of 4-amino-2-methyl-5-hydroxymethylpyrimidine pyrophosphate (HMP-PP) to 4-amino-2-methyl-5-hydroxymethylpyrimidine phosphate (HMP-P). The chain is HMP-PP phosphatase from Salmonella agona (strain SL483).